Here is a 270-residue protein sequence, read N- to C-terminus: Putative hydro-lyase Reut_A2449 (270 aa).

The protein belongs to the D-glutamate cyclase family.

The protein is Putative hydro-lyase Reut_A2449 of Cupriavidus pinatubonensis (strain JMP 134 / LMG 1197) (Cupriavidus necator (strain JMP 134)).